Here is a 256-residue protein sequence, read N- to C-terminus: Fibroblast growth factor 3 (256 aa).

An N-terminal signal peptide occupies residues 1-18; it reads MVIILLLLLLSFLDPSLE. Disordered stretches follow at residues 31–54, 151–176, and 219–256; these read APCA…GGVY, RHHA…SSKR, and LRES…RADI. Residues 238–256 are compositionally biased toward basic residues; sequence ERRRRRHRGSKGHNRRADI.

Belongs to the heparin-binding growth factors family.

The protein resides in the secreted. Functionally, plays an important role in the regulation of embryonic development, cell proliferation, and cell differentiation. The polypeptide is Fibroblast growth factor 3 (fgf3) (Danio rerio (Zebrafish)).